The sequence spans 227 residues: Translation initiation factor 6 (227 aa).

The protein belongs to the eIF-6 family.

In terms of biological role, binds to the 50S ribosomal subunit and prevents its association with the 30S ribosomal subunit to form the 70S initiation complex. This Methanococcus aeolicus (strain ATCC BAA-1280 / DSM 17508 / OCM 812 / Nankai-3) protein is Translation initiation factor 6.